The chain runs to 432 residues: Probable N-acetylmuramoyl-L-alanine amidase AmiB (432 aa).

Residues 1 to 20 form the signal peptide; it reads MKTKILFFLFFSTFSFSIFA. Residues 25–244 form the MurNAc-LAA domain; that stretch reads IAIDPGHGGK…IAYMIYEGLV (220 aa). LysM domains follow at residues 292 to 335 and 385 to 429; these read IRHI…SIKI and LYHK…KIKL.

This sequence belongs to the N-acetylmuramoyl-L-alanine amidase 3 family.

It localises to the periplasm. The enzyme catalyses Hydrolyzes the link between N-acetylmuramoyl residues and L-amino acid residues in certain cell-wall glycopeptides.. Cell-wall hydrolase involved in septum cleavage during cell division. This chain is Probable N-acetylmuramoyl-L-alanine amidase AmiB (amiB), found in Haemophilus influenzae (strain ATCC 51907 / DSM 11121 / KW20 / Rd).